The sequence spans 358 residues: Peptide chain release factor 1 (358 aa).

Gln235 carries the N5-methylglutamine modification. The interval 284-309 (KVESERSASRKSQVGSGDRSERIRTY) is disordered.

Belongs to the prokaryotic/mitochondrial release factor family. Post-translationally, methylated by PrmC. Methylation increases the termination efficiency of RF1.

Its subcellular location is the cytoplasm. Its function is as follows. Peptide chain release factor 1 directs the termination of translation in response to the peptide chain termination codons UAG and UAA. In Bartonella tribocorum (strain CIP 105476 / IBS 506), this protein is Peptide chain release factor 1.